Here is a 390-residue protein sequence, read N- to C-terminus: Queuine tRNA-ribosyltransferase (390 aa).

Asp90 (proton acceptor) is an active-site residue. Substrate-binding positions include 90 to 94 (DSGGF), Asp144, Gln197, and Gly224. Positions 255–261 (GVGTPED) are RNA binding. The Nucleophile role is filled by Asp274. The segment at 279–283 (TRNAR) is RNA binding; important for wobble base 34 recognition. Cys312, Cys314, Cys317, and His354 together coordinate Zn(2+).

It belongs to the queuine tRNA-ribosyltransferase family. In terms of assembly, homodimer. Within each dimer, one monomer is responsible for RNA recognition and catalysis, while the other monomer binds to the replacement base PreQ1. Requires Zn(2+) as cofactor.

It catalyses the reaction 7-aminomethyl-7-carbaguanine + guanosine(34) in tRNA = 7-aminomethyl-7-carbaguanosine(34) in tRNA + guanine. It functions in the pathway tRNA modification; tRNA-queuosine biosynthesis. In terms of biological role, catalyzes the base-exchange of a guanine (G) residue with the queuine precursor 7-aminomethyl-7-deazaguanine (PreQ1) at position 34 (anticodon wobble position) in tRNAs with GU(N) anticodons (tRNA-Asp, -Asn, -His and -Tyr). Catalysis occurs through a double-displacement mechanism. The nucleophile active site attacks the C1' of nucleotide 34 to detach the guanine base from the RNA, forming a covalent enzyme-RNA intermediate. The proton acceptor active site deprotonates the incoming PreQ1, allowing a nucleophilic attack on the C1' of the ribose to form the product. After dissociation, two additional enzymatic reactions on the tRNA convert PreQ1 to queuine (Q), resulting in the hypermodified nucleoside queuosine (7-(((4,5-cis-dihydroxy-2-cyclopenten-1-yl)amino)methyl)-7-deazaguanosine). In Leptothrix cholodnii (strain ATCC 51168 / LMG 8142 / SP-6) (Leptothrix discophora (strain SP-6)), this protein is Queuine tRNA-ribosyltransferase.